The chain runs to 113 residues: Protein translation factor SUI1 homolog (113 aa).

The tract at residues 1 to 24 is disordered; it reads MSELDSQVPTAFDPFADANAEDSG. Residue serine 2 is modified to N-acetylserine.

This sequence belongs to the SUI1 family.

In terms of biological role, probably involved in translation. This chain is Protein translation factor SUI1 homolog, found in Brassica oleracea (Wild cabbage).